Consider the following 126-residue polypeptide: Holo-[acyl-carrier-protein] synthase (126 aa).

Positions 9 and 58 each coordinate Mg(2+).

The protein belongs to the P-Pant transferase superfamily. AcpS family. It depends on Mg(2+) as a cofactor.

The protein localises to the cytoplasm. It carries out the reaction apo-[ACP] + CoA = holo-[ACP] + adenosine 3',5'-bisphosphate + H(+). Its function is as follows. Transfers the 4'-phosphopantetheine moiety from coenzyme A to a Ser of acyl-carrier-protein. This Sodalis glossinidius (strain morsitans) protein is Holo-[acyl-carrier-protein] synthase.